The following is a 678-amino-acid chain: Probable antibacterial peptide polyprotein (678 aa).

14 tandem repeats follow at residues 1–67 (MRSP…PEVR), 68–114 (ERRS…PEVR), 115–161 (ERRS…PEVR), 162–208 (ERRS…PEVR), 209–255 (ERRS…PEVR), 256–302 (ERGS…PEVR), 303–349 (ERRS…PEVR), 350–396 (ERRS…PEVR), 397–443 (ERRS…PEVR), 444–490 (ERRS…PEVR), 491–537 (ERRS…PEVR), 538–584 (ERRS…PEVR), 585–631 (ERRS…PEVR), and 632–678 (ERRS…PEVR). The segment at 1–678 (MRSPRVIHLA…SEGVVLPEVR (678 aa)) is 14 X approximate tandem repeats. The O-linked (GalNAc...) threonine glycan is linked to Thr-32. Disordered regions lie at residues 58 to 97 (SEAELLPEVRERRSPVDKGGYLPRPTPPRPVYRSRRDASL) and 113 to 678 (VRER…PEVR). Positions 64–73 (PEVRERRSPV) are enriched in basic and acidic residues. O-linked (GalNAc...) threonine glycosylation is found at Thr-83 and Thr-130. Low complexity predominate over residues 145 to 157 (ESELSPLSEAEVL). Positions 158 to 167 (PEVRERRSPV) are enriched in basic and acidic residues. Thr-177 carries an O-linked (GalNAc...) threonine glycan. Low complexity predominate over residues 188 to 204 (VASLESELSPLSEAEVL). Residues 205–214 (PEVRERRSPV) show a composition bias toward basic and acidic residues. O-linked (GalNAc...) threonine glycosylation is found at Thr-224 and Thr-271. A compositionally biased stretch (basic and acidic residues) spans 299-308 (PEVRERRSPV). An O-linked (GalNAc...) threonine glycan is attached at Thr-318. Residues 333–345 (ESELSPLSEAEVL) are compositionally biased toward low complexity. Positions 346 to 355 (PEVRERRSPV) are enriched in basic and acidic residues. The O-linked (GalNAc...) threonine glycan is linked to Thr-365. Residues 380–392 (ESELSPLSEAEVL) are compositionally biased toward low complexity. Positions 393 to 402 (PEVRERRSPV) are enriched in basic and acidic residues. Thr-412 is a glycosylation site (O-linked (GalNAc...) threonine). Residues 427–439 (ESELSPLSEAEVL) show a composition bias toward low complexity. Over residues 440-449 (PEVRERRSPV) the composition is skewed to basic and acidic residues. Thr-459 is a glycosylation site (O-linked (GalNAc...) threonine). Over residues 474–486 (ESELSPLSEAEVL) the composition is skewed to low complexity. Residues 487–496 (PEVRERRSPV) are compositionally biased toward basic and acidic residues. Thr-506 carries O-linked (GalNAc...) threonine glycosylation. The span at 521 to 533 (ESELSPSSEAEVL) shows a compositional bias: low complexity. A compositionally biased stretch (basic and acidic residues) spans 534–543 (PEVRERRSPV). An O-linked (GalNAc...) threonine glycan is attached at Thr-553. A compositionally biased stretch (low complexity) spans 568–580 (ESELSPLSEAEVL). Positions 581-590 (PEVRERRSPV) are enriched in basic and acidic residues. The O-linked (GalNAc...) threonine glycan is linked to Thr-600. Residues 615 to 627 (ESELSPLSEAEGL) are compositionally biased toward low complexity. The O-linked (GalNAc...) threonine glycan is linked to Thr-647.

The protein localises to the secreted. Functionally, has antibacterial activity in vitro. This chain is Probable antibacterial peptide polyprotein, found in Riptortus clavatus (Bean bug).